The primary structure comprises 729 residues: Polyribonucleotide nucleotidyltransferase (729 aa).

Asp-510 and Asp-516 together coordinate Mg(2+). The KH domain maps to 576 to 635 (PRVISVKIPVDKIGEVIGPKGKMINQIQADSGAEITVEDDGTIYIGAADGTSAETARSAI). The 73-residue stretch at 647–719 (GERYLGTIVK…ARGKISLSPS (73 aa)) folds into the S1 motif domain.

The protein belongs to the polyribonucleotide nucleotidyltransferase family. The cofactor is Mg(2+).

Its subcellular location is the cytoplasm. The catalysed reaction is RNA(n+1) + phosphate = RNA(n) + a ribonucleoside 5'-diphosphate. Involved in mRNA degradation. Catalyzes the phosphorolysis of single-stranded polyribonucleotides processively in the 3'- to 5'-direction. The sequence is that of Polyribonucleotide nucleotidyltransferase from Frankia alni (strain DSM 45986 / CECT 9034 / ACN14a).